Reading from the N-terminus, the 479-residue chain is GTPase Der (479 aa).

EngA-type G domains lie at 3-166 (PVVA…AEEY) and 192-365 (LKLA…ASAT). GTP is bound by residues 9–16 (GRPNVGKS), 56–60 (DTGGI), 118–121 (NKID), 198–205 (GRPNVGKS), 245–249 (DTAGV), and 310–313 (NKWD). The 85-residue stretch at 366 to 450 (QRISTSKLTK…PIKVEFREPV (85 aa)) folds into the KH-like domain.

Belongs to the TRAFAC class TrmE-Era-EngA-EngB-Septin-like GTPase superfamily. EngA (Der) GTPase family. As to quaternary structure, associates with the 50S ribosomal subunit.

Its function is as follows. GTPase that plays an essential role in the late steps of ribosome biogenesis. In Idiomarina loihiensis (strain ATCC BAA-735 / DSM 15497 / L2-TR), this protein is GTPase Der.